The primary structure comprises 142 residues: HTH-type transcriptional regulator MntR (142 aa).

The HTH dtxR-type domain maps to Met-1 to Thr-63. The Mn(2+) site is built by Asp-8, Glu-11, His-77, Glu-99, Glu-102, and His-103.

It belongs to the DtxR/MntR family. Homodimer.

It localises to the cytoplasm. Its activity is regulated as follows. DNA binding is strongly activated by Mn(2+). Central regulator of manganese homeostasis. This Bacillus velezensis (strain DSM 23117 / BGSC 10A6 / LMG 26770 / FZB42) (Bacillus amyloliquefaciens subsp. plantarum) protein is HTH-type transcriptional regulator MntR.